The following is a 557-amino-acid chain: Urocanate hydratase (557 aa).

The segment at 1–20 (MSNPRHNEREVRSPRGDELN) is disordered. Residues 52-53 (GG), Gln130, 176-178 (GMG), Glu196, Arg201, 242-243 (NA), 263-267 (QTSAH), 273-274 (YL), and Tyr322 contribute to the NAD(+) site. The active site involves Cys410. Gly492 contributes to the NAD(+) binding site.

The protein belongs to the urocanase family. NAD(+) serves as cofactor.

It localises to the cytoplasm. It catalyses the reaction 4-imidazolone-5-propanoate = trans-urocanate + H2O. It functions in the pathway amino-acid degradation; L-histidine degradation into L-glutamate; N-formimidoyl-L-glutamate from L-histidine: step 2/3. In terms of biological role, catalyzes the conversion of urocanate to 4-imidazolone-5-propionate. This Brucella anthropi (strain ATCC 49188 / DSM 6882 / CCUG 24695 / JCM 21032 / LMG 3331 / NBRC 15819 / NCTC 12168 / Alc 37) (Ochrobactrum anthropi) protein is Urocanate hydratase.